The following is a 269-amino-acid chain: Short-chain dehydrogenase/reductase ABA4 (269 aa).

Residues I34, D80, R144, Y174, K178, I207, and T209 each coordinate NADP(+). The active-site Proton donor is Y174. K178 functions as the Lowers pKa of active site Tyr in the catalytic mechanism.

The protein belongs to the short-chain dehydrogenases/reductases (SDR) family.

Its pathway is hormone biosynthesis. Short-chain dehydrogenase/reductase involved in the biosynthesis of abscisic acid (ABA), a phytohormone that acts antagonistically toward salicylic acid (SA), jasmonic acid (JA) and ethylene (ETH) signaling, to impede plant defense responses. During pathogen-host interaction, ABA plays a dual role in disease severity by increasing plant susceptibility and accelerating pathogenesis in the fungus itself. The first step of the pathway catalyzes the reaction from farnesyl diphosphate to alpha-ionylideneethane performed by the alpha-ionylideneethane synthase ABA3 via a three-step reaction mechanism involving 2 neutral intermediates, beta-farnesene and allofarnesene. The cytochrome P450 monooxygenase ABA1 might then be involved in the conversion of alpha-ionylideneethane to alpha-ionylideneacetic acid. Alpha-ionylideneacetic acid is further converted to abscisic acid in 2 steps involving the cytochrome P450 monooxygenase ABA2 and the short-chain dehydrogenase/reductase ABA4, via the intermediates 1'-deoxy-ABA or 1',4'-trans-diol-ABA, depending on the order of action of these 2 enzymes. ABA2 is responsible for the hydroxylation of carbon atom C-1' and ABA4 might be involved in the oxidation of the C-4' carbon atom. The protein is Short-chain dehydrogenase/reductase ABA4 (ABA4) of Pyricularia oryzae (strain Y34) (Rice blast fungus).